A 515-amino-acid chain; its full sequence is GMP synthase [glutamine-hydrolyzing] (515 aa).

The Glutamine amidotransferase type-1 domain occupies Lys-6–Asp-198. The active-site Nucleophile is the Cys-83. Residues His-172 and Glu-174 contribute to the active site. The GMPS ATP-PPase domain occupies Trp-199 to Arg-390. Ser-226 to Thr-232 provides a ligand contact to ATP.

Homodimer.

It catalyses the reaction XMP + L-glutamine + ATP + H2O = GMP + L-glutamate + AMP + diphosphate + 2 H(+). It participates in purine metabolism; GMP biosynthesis; GMP from XMP (L-Gln route): step 1/1. In terms of biological role, catalyzes the synthesis of GMP from XMP. The chain is GMP synthase [glutamine-hydrolyzing] from Maridesulfovibrio salexigens (strain ATCC 14822 / DSM 2638 / NCIMB 8403 / VKM B-1763) (Desulfovibrio salexigens).